The chain runs to 310 residues: tRNA-splicing endonuclease subunit Sen34 (310 aa).

The disordered stretch occupies residues 119–177 (GQAAKKQKLEQASGASSSQEAGSSQAAKEDETSDGQASGEQEEAGPSSSQAGPSNGVAP). Residues 128-144 (EQASGASSSQEAGSSQA) are compositionally biased toward low complexity. Active-site residues include tyrosine 247, histidine 255, and lysine 286.

The protein belongs to the tRNA-intron endonuclease family. As to quaternary structure, tRNA splicing endonuclease is a heterotetramer composed of TSEN2, TSEN15, TSEN34/LENG5 and TSEN54. tRNA splicing endonuclease complex also contains proteins of the pre-mRNA 3'-end processing machinery such as CLP1, CPSF1, CPSF4 and CSTF2.

The protein resides in the nucleus. It is found in the nucleolus. The catalysed reaction is pretRNA = a 3'-half-tRNA molecule with a 5'-OH end + a 5'-half-tRNA molecule with a 2',3'-cyclic phosphate end + an intron with a 2',3'-cyclic phosphate and a 5'-hydroxyl terminus.. In terms of biological role, constitutes one of the two catalytic subunit of the tRNA-splicing endonuclease complex, a complex responsible for identification and cleavage of the splice sites in pre-tRNA. It cleaves pre-tRNA at the 5'- and 3'-splice sites to release the intron. The products are an intron and two tRNA half-molecules bearing 2',3'-cyclic phosphate and 5'-OH termini. There are no conserved sequences at the splice sites, but the intron is invariably located at the same site in the gene, placing the splice sites an invariant distance from the constant structural features of the tRNA body. It probably carries the active site for 3'-splice site cleavage. The tRNA splicing endonuclease is also involved in mRNA processing via its association with pre-mRNA 3'-end processing factors, establishing a link between pre-tRNA splicing and pre-mRNA 3'-end formation, suggesting that the endonuclease subunits function in multiple RNA-processing events. This is tRNA-splicing endonuclease subunit Sen34 (TSEN34) from Homo sapiens (Human).